The chain runs to 273 residues: Phosphatidylglycerol--prolipoprotein diacylglyceryl transferase (273 aa).

7 helical membrane-spanning segments follow: residues 21–41 (VSIR…LWLA), 60–80 (LLFA…VIFY), 95–115 (VWTG…AMFW), 124–144 (FFGV…MGRM), 176–196 (SQLY…NWFI), 203–223 (GSVS…VEFV), and 237–257 (ISMG…MMVW). R143 serves as a coordination point for a 1,2-diacyl-sn-glycero-3-phospho-(1'-sn-glycerol).

This sequence belongs to the Lgt family.

The protein localises to the cell inner membrane. It carries out the reaction L-cysteinyl-[prolipoprotein] + a 1,2-diacyl-sn-glycero-3-phospho-(1'-sn-glycerol) = an S-1,2-diacyl-sn-glyceryl-L-cysteinyl-[prolipoprotein] + sn-glycerol 1-phosphate + H(+). It functions in the pathway protein modification; lipoprotein biosynthesis (diacylglyceryl transfer). Functionally, catalyzes the transfer of the diacylglyceryl group from phosphatidylglycerol to the sulfhydryl group of the N-terminal cysteine of a prolipoprotein, the first step in the formation of mature lipoproteins. This is Phosphatidylglycerol--prolipoprotein diacylglyceryl transferase from Vibrio parahaemolyticus serotype O3:K6 (strain RIMD 2210633).